The sequence spans 92 residues: Small ribosomal subunit protein uS19c (92 aa).

This sequence belongs to the universal ribosomal protein uS19 family.

Its subcellular location is the plastid. The protein resides in the chloroplast. Functionally, protein S19 forms a complex with S13 that binds strongly to the 16S ribosomal RNA. The protein is Small ribosomal subunit protein uS19c of Vitis vinifera (Grape).